Here is a 355-residue protein sequence, read N- to C-terminus: MTELKNDRYLRALLKQPVDYTPVWMMRQAGRYLPEYKATRAEAGDFMSLCKNAELASEVTLQPLRRFPLDAAILFSDILTIPDAMGLGLYFETGEGPKFERPITCKADVDKIGLPDPEGELQYVMNAVRQIRKDLKGEVPLIGFSGSPWTLATYMVEGGSSKAFTKIKKMMYAEPATLHLLLDKLADSVIEYLNAQIKAGAQSVMVFDTWGGVLTPRDYNEFSLRYMHKIVDGLIRENEGRRVPVTLFTKNGGMWLESIAATGCDAVGLDWTINIADAKARIGDKVALQGNMDPSILYAQPERIRQEVGTILEGFGDAGTGHVFNLGHGIHLDVPPENAGVFVDAVHDLSKPYHK.

Substrate-binding positions include 27-31 (RQAGR), Asp77, Tyr154, Thr209, and His328.

The protein belongs to the uroporphyrinogen decarboxylase family. In terms of assembly, homodimer.

Its subcellular location is the cytoplasm. It catalyses the reaction uroporphyrinogen III + 4 H(+) = coproporphyrinogen III + 4 CO2. It participates in porphyrin-containing compound metabolism; protoporphyrin-IX biosynthesis; coproporphyrinogen-III from 5-aminolevulinate: step 4/4. Catalyzes the decarboxylation of four acetate groups of uroporphyrinogen-III to yield coproporphyrinogen-III. In Aliivibrio fischeri (strain ATCC 700601 / ES114) (Vibrio fischeri), this protein is Uroporphyrinogen decarboxylase.